The chain runs to 131 residues: Small ribosomal subunit protein uS11 (131 aa).

This sequence belongs to the universal ribosomal protein uS11 family. Part of the 30S ribosomal subunit. Interacts with proteins S7 and S18. Binds to IF-3.

Its function is as follows. Located on the platform of the 30S subunit, it bridges several disparate RNA helices of the 16S rRNA. Forms part of the Shine-Dalgarno cleft in the 70S ribosome. The polypeptide is Small ribosomal subunit protein uS11 (Exiguobacterium sp. (strain ATCC BAA-1283 / AT1b)).